Reading from the N-terminus, the 70-residue chain is uncharacterized protein (70 aa).

Transmembrane regions (helical) follow at residues 13–33 and 39–59; these read YYAF…LLGF and QTYA…GLII.

Its subcellular location is the cell membrane. This is an uncharacterized protein from Escherichia coli O6:H1 (strain CFT073 / ATCC 700928 / UPEC).